Consider the following 116-residue polypeptide: Protein Wnt-5b (116 aa).

A lipid anchor (O-palmitoleoyl serine; by PORCN) is attached at serine 1. Residues asparagine 69 and asparagine 83 are each glycosylated (N-linked (GlcNAc...) asparagine). A disulfide bridge connects residues cysteine 82 and cysteine 97.

The protein belongs to the Wnt family. Post-translationally, palmitoleoylation is required for efficient binding to frizzled receptors. Depalmitoleoylation leads to Wnt signaling pathway inhibition.

Its subcellular location is the secreted. It is found in the extracellular space. The protein resides in the extracellular matrix. Functionally, ligand for members of the frizzled family of seven transmembrane receptors. Probable developmental protein. May be a signaling molecule which affects the development of discrete regions of tissues. Is likely to signal over only few cell diameters. The protein is Protein Wnt-5b (WNT-5B) of Plethodon jordani (Red-cheeked salamander).